The chain runs to 1861 residues: Protein TANC1 (1861 aa).

Methionine 1 bears the N-acetylmethionine mark. Disordered regions lie at residues methionine 1 to proline 46, serine 63 to arginine 99, lysine 206 to glycine 225, glutamine 257 to proline 311, and glutamine 439 to glutamate 486. The segment covering lysine 8–glycine 21 has biased composition (basic and acidic residues). Serine 63, serine 66, serine 67, serine 207, and serine 270 each carry phosphoserine. Polar residues predominate over residues lysine 206–leucine 219. Residues isoleucine 440–threonine 455 are compositionally biased toward polar residues. Low complexity predominate over residues threonine 461–leucine 480. The residue at position 465 (serine 465) is a Phosphoserine. ANK repeat units lie at residues glutamate 896 to tyrosine 928, asparagine 934 to glycine 963, asparagine 967 to histidine 996, lysine 1000 to proline 1029, alanine 1040 to valine 1069, tryptophan 1078 to arginine 1107, arginine 1111 to leucine 1140, glutamine 1144 to serine 1173, glutamate 1177 to glutamine 1206, asparagine 1210 to histidine 1239, and serine 1243 to asparagine 1272. TPR repeat units lie at residues leucine 1289–glutamate 1322, valine 1336–serine 1369, and glutamate 1371–asparagine 1403. Low complexity predominate over residues glutamine 1421–proline 1431. Disordered stretches follow at residues glutamine 1421 to serine 1485 and valine 1636 to glycine 1696. Serine 1439 bears the Phosphoserine mark. Low complexity-rich tracts occupy residues glutamine 1467–serine 1485 and serine 1659–serine 1689. Phosphoserine is present on residues serine 1668, serine 1676, and serine 1677.

This sequence belongs to the TANC family. In terms of assembly, interacts probably directly with DLG1, DLG4, HOMER1. Interacts with DLGAP1, INA, CAMK2A, GRIN2B and GRIA1. Interacts with TNIK. Interacts with MINK1. Phosphorylated; by MINK1 and TNIK upon stimulation by RAP2A.

Its subcellular location is the postsynaptic density. Functionally, may be a scaffold component in the postsynaptic density. This chain is Protein TANC1 (TANC1), found in Homo sapiens (Human).